The primary structure comprises 264 residues: Probable pectate lyase D (264 aa).

The signal sequence occupies residues 1-17; sequence MFFKQLAVLSFATSALA. N-linked (GlcNAc...) asparagine glycosylation occurs at asparagine 60. A disordered region spans residues 234-264; that stretch reads YEGTDNNDEEPQEISTGPSNACQYTDPLPSC. Over residues 235–245 the composition is skewed to acidic residues; sequence EGTDNNDEEPQ. Residues 246–256 show a composition bias toward polar residues; that stretch reads EISTGPSNACQ.

It belongs to the polysaccharide lyase 3 family. Ca(2+) serves as cofactor.

It localises to the secreted. The catalysed reaction is Eliminative cleavage of (1-&gt;4)-alpha-D-galacturonan to give oligosaccharides with 4-deoxy-alpha-D-galact-4-enuronosyl groups at their non-reducing ends.. Pectinolytic enzyme consist of four classes of enzymes: pectin lyase, polygalacturonase, pectin methylesterase and rhamnogalacturonase. Among pectinolytic enzymes, pectin lyase is the most important in depolymerization of pectin, since it cleaves internal glycosidic bonds of highly methylated pectins. Favors pectate, the anion, over pectin, the methyl ester. This is Probable pectate lyase D (plyD) from Emericella nidulans (strain FGSC A4 / ATCC 38163 / CBS 112.46 / NRRL 194 / M139) (Aspergillus nidulans).